Reading from the N-terminus, the 39-residue chain is IFECVFSCDIEKEGKPCKPKGEKKCSGGWKCKIKLCLKI.

Cystine bridges form between C4-C25, C8-C31, and C17-C36.

It belongs to the neurotoxin 12 (Hwtx-2) family. 06 (TXP1) subfamily. As to expression, expressed by the venom gland.

The protein resides in the secreted. Its function is as follows. Inhibits voltage-gated calcium channels (Cav) in rat cerebellar granule cells. Has insecticidal activity. The polypeptide is Omega-theraphotoxin-Asp1g (Aphonopelma sp. (American tarantula)).